Here is a 180-residue protein sequence, read N- to C-terminus: UDP-4-amino-4,6-dideoxy-N-acetyl-beta-L-altrosamine N-acetyltransferase (180 aa).

The region spanning 13–169 is the N-acetyltransferase domain; the sequence is IDFTNLNDGE…IDVLLYYKDK (157 aa).

The enzyme catalyses UDP-4-amino-4,6-dideoxy-N-acetyl-beta-L-altrosamine + acetyl-CoA = UDP-2,4-diacetamido-2,4,6-trideoxy-beta-L-altrose + CoA + H(+). Its function is as follows. Catalyzes the third step in the biosynthesis of pseudaminic acid, a sialic-acid-like sugar that is used to modify flagellin. Mediates N-4 acetylation of UDP-4-amino-4,6-dideoxy-beta-L-AltNAc to form UDP-2,4-diacetamido-2,4,6-trideoxy-beta-L-altropyranose. The chain is UDP-4-amino-4,6-dideoxy-N-acetyl-beta-L-altrosamine N-acetyltransferase (pseH) from Helicobacter pylori (strain ATCC 700392 / 26695) (Campylobacter pylori).